The following is a 463-amino-acid chain: T-box transcription factor TBX1-B (463 aa).

Disordered stretches follow at residues 39-58 (SPSP…PCSA) and 75-102 (GASS…APVK). Positions 75 to 96 (GASSSSCASSTPGSGSTGSSSG) are enriched in low complexity. The T-box DNA-binding region spans 119 to 297 (LWDEFNQLGT…SNPFAKGFRD (179 aa)). Disordered stretches follow at residues 320–343 (RSRN…RREY) and 367–406 (SPSL…HHHP). Residues 323–332 (NPVSSPPQNG) show a composition bias toward polar residues. The segment covering 333-343 (SDKDGDGRREY) has biased composition (basic and acidic residues). Over residues 367 to 380 (SPSLPVPGGLVPLS) the composition is skewed to low complexity. Residues 420–431 (KTRPAPYPLPSI) carry the Nuclear localization signal motif.

Binds DNA as a dimer. Interacts with dscr6/ripply3.

The protein localises to the nucleus. Functionally, probable transcriptional regulator involved in developmental processes. Binds to the palindromic T site 5'-TTCACACCTAGGTGTGAA-3' DNA sequence. Induces pre-placodal ectoderm (PPE) gene expression in regions where RIPPLY3 is absent. Plays a role in the formation of the anteroposterior (AP) axis during embryonic development; required to establish the posterolateral border of the pre-placodal ectoderm (PPE) acting downstream of the retinoic acid receptor (RAR) signaling. In terms of biological role, probable transcriptional regulator involved in developmental processes. Binds to the palindromic T site 5'-TTCACACCTAGGTGTGAA-3' DNA sequence. Is required for normal development of the pharyngeal arch arteries. This is T-box transcription factor TBX1-B (tbx1-b) from Xenopus laevis (African clawed frog).